The sequence spans 368 residues: GDSL esterase/lipase At4g16230 (368 aa).

A signal peptide spans 1–24 (MSLLVFLCQIIVLSVLFFSEVCLA). Residue serine 37 is the Nucleophile of the active site. N-linked (GlcNAc...) asparagine glycans are attached at residues asparagine 117 and asparagine 286. Residues aspartate 329 and histidine 332 contribute to the active site.

It belongs to the 'GDSL' lipolytic enzyme family.

It localises to the secreted. The sequence is that of GDSL esterase/lipase At4g16230 from Arabidopsis thaliana (Mouse-ear cress).